Reading from the N-terminus, the 226-residue chain is Ribosomal RNA large subunit methyltransferase E (226 aa).

The tract at residues 1 to 25 (MVKPPAGGNEGGRGKPARLKTAYGR) is disordered. S-adenosyl-L-methionine contacts are provided by Gly-82, Trp-84, Asp-100, Asp-116, and Asp-140. Lys-180 (proton acceptor) is an active-site residue.

The protein belongs to the class I-like SAM-binding methyltransferase superfamily. RNA methyltransferase RlmE family.

It is found in the cytoplasm. The enzyme catalyses uridine(2552) in 23S rRNA + S-adenosyl-L-methionine = 2'-O-methyluridine(2552) in 23S rRNA + S-adenosyl-L-homocysteine + H(+). Specifically methylates the uridine in position 2552 of 23S rRNA at the 2'-O position of the ribose in the fully assembled 50S ribosomal subunit. This is Ribosomal RNA large subunit methyltransferase E from Caulobacter vibrioides (strain ATCC 19089 / CIP 103742 / CB 15) (Caulobacter crescentus).